The following is a 154-amino-acid chain: 6,7-dimethyl-8-ribityllumazine synthase (154 aa).

5-amino-6-(D-ribitylamino)uracil contacts are provided by residues tryptophan 22, 56-58, and 80-82; these read AWE and CVV. 85-86 serves as a coordination point for (2S)-2-hydroxy-3-oxobutyl phosphate; the sequence is DT. Histidine 88 serves as the catalytic Proton donor. Residue asparagine 113 coordinates 5-amino-6-(D-ribitylamino)uracil. Residue arginine 127 coordinates (2S)-2-hydroxy-3-oxobutyl phosphate.

Belongs to the DMRL synthase family. As to quaternary structure, forms an icosahedral capsid composed of 60 subunits, arranged as a dodecamer of pentamers.

It carries out the reaction (2S)-2-hydroxy-3-oxobutyl phosphate + 5-amino-6-(D-ribitylamino)uracil = 6,7-dimethyl-8-(1-D-ribityl)lumazine + phosphate + 2 H2O + H(+). The protein operates within cofactor biosynthesis; riboflavin biosynthesis; riboflavin from 2-hydroxy-3-oxobutyl phosphate and 5-amino-6-(D-ribitylamino)uracil: step 1/2. Functionally, catalyzes the formation of 6,7-dimethyl-8-ribityllumazine by condensation of 5-amino-6-(D-ribitylamino)uracil with 3,4-dihydroxy-2-butanone 4-phosphate. This is the penultimate step in the biosynthesis of riboflavin. The protein is 6,7-dimethyl-8-ribityllumazine synthase of Xylella fastidiosa (strain 9a5c).